The chain runs to 355 residues: MNKKIEKNNNVINKPNKYESNTTDNQLIMKKNANSGSKKSRSTKVEVETNLPKRRGRRPKKILDSFESTTNVLNTSTEQNNSAVILRLPKIDPSKLSGLKNKQGRKVFEVPETTEPGDNYSDNELSEGMFRNDIPKDDVCHKCIKYEKEITHLKNEVMKLKNCDKTDKTSKIHNTSVTFISLGSGKKMSLKKTNLRCLWDCHKFDNIPCYLPELYNNGKYYVIASVFCSFNCALAHNLYYIKDSKIDIRKSLVFRLYRELYGLTPDEPIELKEAPPKELLEDFGGKVNIIDYRRSFIKLNKEFIVYMPPLKPIGVQIVEHDTDTDGNDTDRDYVLKRNKPLMKGRGIVSMMGFNK.

The interval 1-61 is disordered; it reads MNKKIEKNNN…PKRRGRRPKK (61 aa). Residues 18-37 are compositionally biased toward polar residues; it reads YESNTTDNQLIMKKNANSGS.

This is an uncharacterized protein from Acanthamoeba polyphaga mimivirus (APMV).